We begin with the raw amino-acid sequence, 197 residues long: ADP-ribosylation factor 1 (197 aa).

Gly2 carries the N-myristoyl glycine lipid modification. Residues Gly24–Thr31, Asp67–Gln71, and Asn126–Asp129 contribute to the GTP site.

The protein belongs to the small GTPase superfamily. Arf family.

The protein localises to the golgi apparatus. The catalysed reaction is GTP + H2O = GDP + phosphate + H(+). GTP-binding protein involved in protein trafficking; may modulate vesicle budding and uncoating within the Golgi apparatus. The chain is ADP-ribosylation factor 1 from Solanum tuberosum (Potato).